Reading from the N-terminus, the 1242-residue chain is Phosphorylase b kinase regulatory subunit alpha, skeletal muscle isoform (1242 aa).

Residues Ser630, Ser731, Ser737, Ser740, Ser760, Ser813, Ser974, Ser983, and Ser987 each carry the phosphoserine modification. The interval 812–842 (LSELYVKVGEIRHWGLIRYISGILRKKVEAL) is calmodulin-binding. Ser1009 is subject to Phosphoserine; by autocatalysis. At Ser1020 the chain carries Phosphoserine; by PKA. Phosphoserine is present on residues Ser1022 and Ser1025. The segment at 1065–1105 (SKDSRQGQWQRRRRLDGALNRVPIGFYQKVWKILQKCHGLS) is calmodulin-binding. Ser1132 carries the post-translational modification Phosphoserine. A lipid anchor (S-farnesyl cysteine) is attached at Cys1239.

The protein belongs to the phosphorylase b kinase regulatory chain family. Hexadecamer of 4 heterotetramers, each composed of alpha, beta, gamma, and delta subunits. Alpha (PHKA1 or PHKA2) and beta (PHKB) are regulatory subunits, gamma (PHKG1 or PHKG2) is the catalytic subunit, and delta is calmodulin. Post-translationally, although the final Cys may be farnesylated, the terminal tripeptide is probably not removed, and the C-terminus is not methylated.

It localises to the cell membrane. It functions in the pathway glycan biosynthesis; glycogen metabolism. By phosphorylation of various serine residues and by calcium. In terms of biological role, phosphorylase b kinase catalyzes the phosphorylation of serine in certain substrates, including troponin I. The alpha chain may bind calmodulin. The chain is Phosphorylase b kinase regulatory subunit alpha, skeletal muscle isoform (Phka1) from Rattus norvegicus (Rat).